The chain runs to 67 residues: Sporulation protein 24 (67 aa).

Serine 24 and serine 32 each carry phosphoserine.

Post-translationally, phosphorylated during meiosis. During meiosis, exists in both unphosphorylated and phosphorylated forms with the highest degree of phosphorylation occurring in mid-meiosis.

The protein localises to the prospore membrane. Functionally, required for efficient sporulation. This chain is Sporulation protein 24, found in Saccharomyces cerevisiae (strain ATCC 204508 / S288c) (Baker's yeast).